Here is a 637-residue protein sequence, read N- to C-terminus: Chloride intracellular channel protein 6 (637 aa).

A disordered region spans residues 1–400 (MAETAEPEGG…EASEEGDPGQ (400 aa)). Residues 35–63 (GPEASEGAAKAPSGEGAGAAAKAGATEEA) show a composition bias toward low complexity. Ser-39 bears the Phosphoserine mark. Residues 126–137 (CELRGEAAREAE) show a composition bias toward basic and acidic residues. Low complexity predominate over residues 138–152 (GQAAAPAAPGAQEEA). Repeat copies occupy residues 155–160 (GDSVDA), 161–166 (EGSIDA), 167–172 (GGSVDA), 173–178 (AGSVDA), 179–184 (GGSIDA), 185–190 (GGSMDA), 191–196 (GGSVDA), 197–202 (GGSIDT), 203–208 (GGSVDA), 209–214 (AGSVDA), 215–220 (GGSIDT), 221–226 (GRNVDA), 227–232 (GGSIDA), 233–238 (GGSVDA), and 239–244 (GGSMDA). Residues 155–244 (GDSVDAEGSI…SVDAGGSMDA (90 aa)) form a 15 X 6 AA tandem repeat of [GEA]-[DGR]-[SN]-[VIM]-D-[AT] region. Positions 247 to 256 (PAGGAHGAGG) are enriched in gly residues. The segment covering 305-314 (GSEDAAGEDG) has biased composition (acidic residues). Basic and acidic residues predominate over residues 315–332 (DQGRPQEETEQQAERQEP). Ser-348 and Ser-393 each carry phosphoserine. A G-site motif is present at residues 420 to 423 (CPFS). A helical transmembrane segment spans residues 422–442 (FSQRLFMILWLKGVIFNVTTV). One can recognise a GST C-terminal domain in the interval 466–637 (DGDVKTDVNK…AYSDVAKRMK (172 aa)).

The protein belongs to the chloride channel CLIC family. As to quaternary structure, monomer (soluble state). Interacts with dopamine receptors DRD2, DRD3 and DRD4. Phosphorylated. As to expression, expressed in brain, chorioretinal, lacrimal glands, submandibular glands, airway epithelium, kidney and gastric mucosa, where it is preferentially expressed in cells that secrete or transport water. In brain, it is highly expressed in choroid plexus. Not detected in pancreas, adrenal glands, heart, skeletal muscle, ileal mucosa, liver and lung.

It is found in the cytoplasm. Its subcellular location is the cell membrane. The catalysed reaction is chloride(in) = chloride(out). Its activity is regulated as follows. Channel activity is redox- and pH-regulated. Inhibited by IAA-94. Its function is as follows. In the soluble state, catalyzes glutaredoxin-like thiol disulfide exchange reactions with reduced glutathione as electron donor. Can insert into membranes and form voltage-dependent chloride-selective channels. The channel opens upon membrane depolarization at positive voltages and closes at negative membrane voltages. May play a critical role in water-secreting cells, possibly through the regulation of chloride ion transport. This is Chloride intracellular channel protein 6 (CLIC6) from Oryctolagus cuniculus (Rabbit).